The sequence spans 136 residues: Large ribosomal subunit protein uL16 (136 aa).

The protein belongs to the universal ribosomal protein uL16 family. In terms of assembly, part of the 50S ribosomal subunit.

Its function is as follows. Binds 23S rRNA and is also seen to make contacts with the A and possibly P site tRNAs. The polypeptide is Large ribosomal subunit protein uL16 (Orientia tsutsugamushi (strain Ikeda) (Rickettsia tsutsugamushi)).